Reading from the N-terminus, the 715-residue chain is Zinc finger protein 544 (715 aa).

The region spanning 14-85 (VCFEDVAMAF…EQEAPRDWKA (72 aa)) is the KRAB domain. Residues lysine 273 and lysine 289 each participate in a glycyl lysine isopeptide (Lys-Gly) (interchain with G-Cter in SUMO2) cross-link. A C2H2-type 1; atypical zinc finger spans residues 354–374 (SVCNQCGKSFSCCKLIHQRTH). 12 consecutive C2H2-type zinc fingers follow at residues 380–402 (FECT…QRTH), 408–430 (YECD…QRIH), 436–458 (YQCI…QRIH), 464–486 (YECT…KRTH), 492–514 (FKCT…QRTH), 520–542 (YECN…QRIH), 548–570 (YQCI…QRIH), 576–598 (YDCT…KRTH), 604–626 (YECN…LQIH), 632–654 (YKCN…QRTH), 660–682 (FECS…HRIH), and 688–710 (YECS…RRTH). Lysine 534 participates in a covalent cross-link: Glycyl lysine isopeptide (Lys-Gly) (interchain with G-Cter in SUMO2).

The protein belongs to the krueppel C2H2-type zinc-finger protein family.

Its subcellular location is the nucleus. Its function is as follows. May be involved in transcriptional regulation. The sequence is that of Zinc finger protein 544 (ZNF544) from Homo sapiens (Human).